We begin with the raw amino-acid sequence, 23 residues long: Basic phospholipase A2 CB1 (23 aa).

As to quaternary structure, heterodimer of an acidic subunit and a basic chain. The acidic subunit is non-toxic, without enzymatic activity and comprises 3 peptides that are cross-linked by 7 disulfide bridges. The basic subunit is toxic, has phospholipase A2 activity and is composed of a single chain. Ca(2+) is required as a cofactor. In terms of processing, contains 7 disulfide bonds. As to expression, expressed by the venom gland.

It localises to the secreted. It catalyses the reaction a 1,2-diacyl-sn-glycero-3-phosphocholine + H2O = a 1-acyl-sn-glycero-3-phosphocholine + a fatty acid + H(+). Snake venom phospholipase A2 (PLA2) that shows presynaptic neurotoxicity. PLA2 catalyzes the calcium-dependent hydrolysis of the 2-acyl groups in 3-sn-phosphoglycerides. The chain is Basic phospholipase A2 CB1 from Crotalus basiliscus (Mexican west-coast rattlesnake).